A 119-amino-acid polypeptide reads, in one-letter code: Ribonuclease P protein component (119 aa).

The protein belongs to the RnpA family. In terms of assembly, consists of a catalytic RNA component (M1 or rnpB) and a protein subunit.

It catalyses the reaction Endonucleolytic cleavage of RNA, removing 5'-extranucleotides from tRNA precursor.. Functionally, RNaseP catalyzes the removal of the 5'-leader sequence from pre-tRNA to produce the mature 5'-terminus. It can also cleave other RNA substrates such as 4.5S RNA. The protein component plays an auxiliary but essential role in vivo by binding to the 5'-leader sequence and broadening the substrate specificity of the ribozyme. The protein is Ribonuclease P protein component of Listeria monocytogenes serotype 4a (strain HCC23).